The sequence spans 91 residues: Small ribosomal subunit protein uS19 (91 aa).

It belongs to the universal ribosomal protein uS19 family.

Protein S19 forms a complex with S13 that binds strongly to the 16S ribosomal RNA. This chain is Small ribosomal subunit protein uS19, found in Prochlorococcus marinus (strain MIT 9515).